A 430-amino-acid polypeptide reads, in one-letter code: Gamma-glutamyl phosphate reductase (430 aa).

The protein belongs to the gamma-glutamyl phosphate reductase family.

The protein resides in the cytoplasm. The enzyme catalyses L-glutamate 5-semialdehyde + phosphate + NADP(+) = L-glutamyl 5-phosphate + NADPH + H(+). Its pathway is amino-acid biosynthesis; L-proline biosynthesis; L-glutamate 5-semialdehyde from L-glutamate: step 2/2. Functionally, catalyzes the NADPH-dependent reduction of L-glutamate 5-phosphate into L-glutamate 5-semialdehyde and phosphate. The product spontaneously undergoes cyclization to form 1-pyrroline-5-carboxylate. This is Gamma-glutamyl phosphate reductase from Psychrobacter arcticus (strain DSM 17307 / VKM B-2377 / 273-4).